Reading from the N-terminus, the 105-residue chain is ATPase inhibitor A, mitochondrial (105 aa).

The tract at residues 17-52 (MSSDQLGELGTGAGKGGGGGGSVRAAGGSFGRREAA) is disordered. Residues 22-51 (LGELGTGAGKGGGGGGSVRAAGGSFGRREA) form an N-terminal inhibitory region region. Positions 25–38 (LGTGAGKGGGGGGS) are enriched in gly residues. Residues 58–105 (FRQKEREQLAALKNHHEEEIDHHKKEIERLQREIDRHKGKIRKLKHDD) are a coiled coil. Residues 73-105 (HEEEIDHHKKEIERLQREIDRHKGKIRKLKHDD) are antiparallel alpha-helical coiled coil region.

It belongs to the ATPase inhibitor family. Homodimer; represents the active form and is present at a pH value below 6.5. Homotetramer; represents the inactive form and is present at a pH value above 7.0.

Its subcellular location is the mitochondrion. Endogenous F(1)F(o)-ATPase inhibitor limiting ATP depletion when the mitochondrial membrane potential falls below a threshold and the F(1)F(o)-ATP synthase starts hydrolyzing ATP to pump protons out of the mitochondrial matrix. Required to avoid the consumption of cellular ATP when the F(1)F(o)-ATP synthase enzyme acts as an ATP hydrolase. Indirectly acts as a regulator of heme synthesis in erythroid tissues: regulates heme synthesis by modulating the mitochondrial pH and redox potential, allowing fech to efficiently catalyze the incorporation of iron into protoporphyrin IX to produce heme. The protein is ATPase inhibitor A, mitochondrial of Danio rerio (Zebrafish).